The sequence spans 131 residues: Large ribosomal subunit protein bL17 (131 aa).

It belongs to the bacterial ribosomal protein bL17 family. As to quaternary structure, part of the 50S ribosomal subunit. Contacts protein L32.

The sequence is that of Large ribosomal subunit protein bL17 from Shewanella violacea (strain JCM 10179 / CIP 106290 / LMG 19151 / DSS12).